We begin with the raw amino-acid sequence, 679 residues long: MSKIRVYELAKELRVPSKVLINVLMDEFGVEVKNHMSVIEDEDAALIKELLAGSEANSELVAEYEAELAEEVNNAAKKKKKRKKGSEDDNLEQDVEVIEIGKTITVKELAEKLNKPVNDVIKTLIFTGVMAAINQEIDFETAEKVAEKYEVAVYEKEEENTLEEFEEETDVEEENLAKRPPIITVMGHVDHGKTSLLDAIRKSKVTSTEAGGITQHIGAYTVEVNGETLTFLDTPGHEAFTAMRARGAQITDVVILVVAADDGIMPQTVEAINHCKAANVPMIVAINKMDREGANPDRVKQELTEHGLVVEDWGGDIIAVPVSAKTRENIDTLLEMVLLTSEMQELKADAGRKAKGTVVEAKLDKGRGAVATLLVQNGTLHMGDSIIVGSTYGRIRAMFDDSGKKIKSAGPSIPVEVLGLSEVPAAGDRFTVVKDEKTARNMAEARKEKIRQESFATSHRVSLEDLYSQIKEGSVKELSVIVKADVQGSVEAIKASLEKLSTDDVKVRVIHGAVGAISETDITLAAASNAIVIGFNVRPDNNAVAASERDGVEVKTYRVIYDAIEDIKSAMIGMLDPEYKEVVLGTAEIRATYKISNVGTIAGGYVLTGKLVRNADVRVIREGIVIFESKLASLKRFKDDVKEVNAGYECGFSVEKFNDIKEGDIIEAYTMEAVQRKEL.

The tr-type G domain occupies 178–347 (KRPPIITVMG…LLTSEMQELK (170 aa)). The interval 187–194 (GHVDHGKT) is G1. 187 to 194 (GHVDHGKT) lines the GTP pocket. Residues 212-216 (GITQH) are G2. The tract at residues 233 to 236 (DTPG) is G3. Residues 233–237 (DTPGH) and 287–290 (NKMD) contribute to the GTP site. Positions 287–290 (NKMD) are G4. The G5 stretch occupies residues 323 to 325 (SAK).

This sequence belongs to the TRAFAC class translation factor GTPase superfamily. Classic translation factor GTPase family. IF-2 subfamily.

The protein localises to the cytoplasm. One of the essential components for the initiation of protein synthesis. Protects formylmethionyl-tRNA from spontaneous hydrolysis and promotes its binding to the 30S ribosomal subunits. Also involved in the hydrolysis of GTP during the formation of the 70S ribosomal complex. The chain is Translation initiation factor IF-2 from Clostridium perfringens (strain ATCC 13124 / DSM 756 / JCM 1290 / NCIMB 6125 / NCTC 8237 / Type A).